A 256-amino-acid chain; its full sequence is MSFTLTNKNVIFVAGLGGIGLDTSKELLKRDLKNLVILDRIENPAAIAELKAINPKVTVTFYPYDVTVPIAETTKLLKTIFAQLKTVDVLINGAGILDDHQIERTIAVNYTGLVNTTTAILDFWDKRKGGPGGIICNIGSVTGFNAIYQVPVYSGTKAAVVNFTSSLAKLAPITGVTAYTVNPGITRTTLVHKFNSWLDVEPQVAEKLLAHPTQPSLACAENFVKAIELNQNGAIWKLDLGTLEAIQWTKHWDSGI.

An N-acetylserine modification is found at serine 2. Residues 12 to 41 (FVAGLGGIGLDTSKELLKRDLKNLVILDRI) and aspartate 65 contribute to the NAD(+) site. Serine 140 is a binding site for substrate. Tyrosine 153 (proton acceptor) is an active-site residue. An NAD(+)-binding site is contributed by lysine 157.

It belongs to the short-chain dehydrogenases/reductases (SDR) family. As to quaternary structure, homodimer.

It carries out the reaction a primary alcohol + NAD(+) = an aldehyde + NADH + H(+). The enzyme catalyses a secondary alcohol + NAD(+) = a ketone + NADH + H(+). Its activity is regulated as follows. Inhibited by 2,2,2-trifluoroethanol and pyrazole. The polypeptide is Alcohol dehydrogenase (Adh) (Drosophila melanogaster (Fruit fly)).